Consider the following 421-residue polypeptide: Putative nickel insertion protein (421 aa).

This sequence belongs to the LarC family.

The protein is Putative nickel insertion protein of Gloeobacter violaceus (strain ATCC 29082 / PCC 7421).